The sequence spans 1478 residues: Phospholipase B1, membrane-associated (1478 aa).

Residues 1–27 form the signal peptide; the sequence is MELYPGVSPVGLLLLLLLGQGPSQIHG. The Extracellular segment spans residues 28–1422; it reads SSGENTLAWQ…KAEEPSNALY (1395 aa). 4 repeat units span residues 43 to 351, 366 to 711, 712 to 1058, and 1068 to 1407. Residues 43–1407 form a 4 X 308-326 AA approximate repeats region; sequence WTLKNFPFPC…RPFLYTLRNS (1365 aa). A glycan (N-linked (GlcNAc...) asparagine) is linked at Asn-180. Residues Ser-404 and Asp-518 contribute to the active site. N-linked (GlcNAc...) asparagine glycosylation is found at Asn-525, Asn-626, and Asn-637. Residue His-659 is part of the active site. Asn-715, Asn-764, Asn-787, Asn-801, Asn-830, Asn-926, Asn-1227, Asn-1280, Asn-1289, and Asn-1387 each carry an N-linked (GlcNAc...) asparagine glycan. The tract at residues 1408–1450 is necessary for membrane localization; sequence QLLPDKAEEPSNALYWAVPVAAIGGLAVGILGVMLWRTVKPVQ. A helical membrane pass occupies residues 1423 to 1443; the sequence is WAVPVAAIGGLAVGILGVMLW. Residues 1444 to 1478 lie on the Cytoplasmic side of the membrane; sequence RTVKPVQQEEEEEDTLPNTSVTQDAVSEKRLKAGN. The disordered stretch occupies residues 1451–1478; it reads QEEEEEDTLPNTSVTQDAVSEKRLKAGN. Over residues 1459–1468 the composition is skewed to polar residues; sequence LPNTSVTQDA. The segment covering 1469–1478 has biased composition (basic and acidic residues); sequence VSEKRLKAGN.

This sequence belongs to the 'GDSL' lipolytic enzyme family. Phospholipase B1 subfamily. Post-translationally, undergoes proteolytic cleavage in the ileum.

Its subcellular location is the apical cell membrane. It catalyses the reaction a 1,2-diacyl-sn-glycero-3-phosphocholine + H2O = a 1-acyl-sn-glycero-3-phosphocholine + a fatty acid + H(+). The enzyme catalyses a 1-O-alkyl-2-acyl-sn-glycero-3-phosphocholine + H2O = a 1-O-alkyl-sn-glycero-3-phosphocholine + a fatty acid + H(+). It carries out the reaction a 1-acyl-sn-glycero-3-phosphocholine + H2O = sn-glycerol 3-phosphocholine + a fatty acid + H(+). The catalysed reaction is a triacylglycerol + H2O = a diacylglycerol + a fatty acid + H(+). It catalyses the reaction 1,2-dihexadecanoyl-sn-glycero-3-phosphocholine + H2O = 1-hexadecanoyl-sn-glycero-3-phosphocholine + hexadecanoate + H(+). The enzyme catalyses 1-hexadecanoyl-2-(9Z-octadecenoyl)-sn-glycero-3-phosphocholine + H2O = 1-hexadecanoyl-sn-glycero-3-phosphocholine + (9Z)-octadecenoate + H(+). It carries out the reaction 1,2-di-(9Z-octadecenoyl)-sn-glycero-3-phosphocholine + H2O = 1-(9Z-octadecenoyl)-sn-glycero-3-phosphocholine + (9Z)-octadecenoate + H(+). The catalysed reaction is 1-hexadecanoyl-2-(9Z,12Z-octadecadienoyl)-sn-glycero-3-phosphocholine + H2O = (9Z,12Z)-octadecadienoate + 1-hexadecanoyl-sn-glycero-3-phosphocholine + H(+). It catalyses the reaction 1-hexadecanoyl-2-(9Z,12Z-octadecadienoyl)-sn-glycero-3-phosphocholine + H2O = 2-(9Z,12Z-octadecadienoyl)-sn-glycero-3-phosphocholine + hexadecanoate + H(+). The enzyme catalyses 1-hexadecanoyl-2-(9Z-octadecenoyl)-sn-glycero-3-phosphoethanolamine + H2O = 1-hexadecanoyl-sn-glycero-3-phosphoethanolamine + (9Z)-octadecenoate + H(+). It carries out the reaction 1-hexadecanoyl-2-(9Z-octadecenoyl)-sn-glycero-3-phospho-(1'-sn-glycerol) + H2O = 1-hexadecanoyl-sn-glycero-3-phospho-(1'-sn-glycerol) + (9Z)-octadecenoate + H(+). The catalysed reaction is 1,2-dihexadecanoyl-sn-glycero-3-phosphocholine + 2 H2O = sn-glycerol 3-phosphocholine + 2 hexadecanoate + 2 H(+). It catalyses the reaction 1-O-hexadecyl-2-(9Z)-octadecenoyl-sn-glycero-3-phosphocholine + H2O = 1-O-hexadecyl-sn-glycero-3-phosphocholine + (9Z)-octadecenoate + H(+). The enzyme catalyses 1-hexadecanoyl-sn-glycero-3-phosphocholine + H2O = sn-glycerol 3-phosphocholine + hexadecanoate + H(+). It carries out the reaction 1,2,3-tri-(9Z-octadecenoyl)-glycerol + H2O = di-(9Z)-octadecenoylglycerol + (9Z)-octadecenoate + H(+). The catalysed reaction is 1-hexadecanoyl-2-(9Z)-octadecenoyl-3-octadecanoyl-sn-glycerol + H2O = 1-hexadecanoyl-2-(9Z-octadecenoyl)-sn-glycerol + octadecanoate + H(+). It catalyses the reaction 1,3-dihexadecanoyl-2-(9Z-octadecenoyl)glycerol + H2O = 1,3-dihexadecanoylglycerol + (9Z)-octadecenoate + H(+). The enzyme catalyses 1,3-dihexadecanoyl-2-(9Z-octadecenoyl)glycerol + H2O = 1-hexadecanoyl-2-(9Z-octadecenoyl)-glycerol + hexadecanoate + H(+). It carries out the reaction 1-hexadecanoyl-2-(9Z)-octadecenoyl-3-octadecanoyl-sn-glycerol + H2O = 1-hexadecanoyl-3-octadecanoyl-sn-glycerol + (9Z)-octadecenoate + H(+). The catalysed reaction is 1-hexadecanoyl-2-(9Z)-octadecenoyl-3-octadecanoyl-sn-glycerol + H2O = 2-(9Z-octadecenoyl)-3-octadecanoyl-sn-glycerol + hexadecanoate + H(+). It catalyses the reaction 1-octadecanoyl-2-(9Z,12Z)-octadecadienoyl-sn-glycerol + H2O = 1-octadecanoyl-sn-glycerol + (9Z,12Z)-octadecadienoate + H(+). The enzyme catalyses 1,2-di-(9Z-octadecenoyl)-sn-glycerol + H2O = 1-(9Z-octadecenoyl)-sn-glycerol + (9Z)-octadecenoate + H(+). It carries out the reaction 2,3-di-(9Z)-octadecenoyl-sn-glycerol + H2O = 3-(9Z-octadecenoyl)-sn-glycerol + (9Z)-octadecenoate + H(+). The catalysed reaction is 1,3-di-(9Z-octadecenoyl)-glycerol + H2O = 1-(9Z-octadecenoyl)-glycerol + (9Z)-octadecenoate + H(+). It catalyses the reaction 1-(9Z-octadecenoyl)-glycerol + H2O = glycerol + (9Z)-octadecenoate + H(+). The enzyme catalyses 2-(9Z-octadecenoyl)-glycerol + H2O = glycerol + (9Z)-octadecenoate + H(+). Its function is as follows. Calcium-independent membrane-associated phospholipase that catalyzes complete diacylation of phospholipids by hydrolyzing both sn-1 and sn-2 fatty acyl chains attached to the glycerol backbone (phospholipase B activity). Has dual phospholipase and lysophospholipase activities toward diacylphospholipids. Preferentially cleaves sn-2 ester bonds over sn-1 bonds. Acts as a lipase toward glycerolipid substrates. Hydrolyzes fatty acyl chains of diacylglycerols with preference for the sn-2 position and of triacylglycerols with not positional selectivity. May also hydrolyze long chain retinyl esters such as retinyl palmitate. May contribute to digestion of dietary phospholipids, glycerolipids and retinoids, facilitating lipid absorption at the brush border. The protein is Phospholipase B1, membrane-associated (Plb1) of Mus musculus (Mouse).